A 272-amino-acid polypeptide reads, in one-letter code: sn-1 stearoyl-lipid 9-desaturase (272 aa).

The next 2 helical transmembrane spans lie at Ile-11 to Ile-31 and Ala-39 to Phe-59. A Histidine box-1 motif is present at residues His-60–His-65. The Histidine box-2 motif lies at His-97–His-101. The helical transmembrane segment at Ile-160–Phe-180 threads the bilayer. Positions His-230–Gln-234 match the Histidine box-3 motif.

The protein belongs to the fatty acid desaturase type 2 family. It depends on Fe(2+) as a cofactor.

It is found in the membrane. It catalyses the reaction a 1-octadecanoyl 2-acyl-glycerolipid + 2 reduced [2Fe-2S]-[ferredoxin] + O2 + 2 H(+) = a 1-[(9Z)-octadecenoyl]-2-acyl-glycerolipid + 2 oxidized [2Fe-2S]-[ferredoxin] + 2 H2O. The protein operates within lipid metabolism; polyunsaturated fatty acid biosynthesis. In terms of biological role, desaturase involved in fatty acid biosynthesis. Introduces a double bond at carbon 9 of stearoyl groups (18:0) attached to the sn-1 position of the glycerol moiety of membrane glycerolipids. Does not desaturate palmitic acid (16:0), palmitoleic acid (16:1) and cis-vaccenic acid (18:1). In Anabaena variabilis, this protein is sn-1 stearoyl-lipid 9-desaturase.